The primary structure comprises 195 residues: 3-isopropylmalate dehydratase small subunit (195 aa).

This sequence belongs to the LeuD family. LeuD type 1 subfamily. In terms of assembly, heterodimer of LeuC and LeuD.

The catalysed reaction is (2R,3S)-3-isopropylmalate = (2S)-2-isopropylmalate. Its pathway is amino-acid biosynthesis; L-leucine biosynthesis; L-leucine from 3-methyl-2-oxobutanoate: step 2/4. In terms of biological role, catalyzes the isomerization between 2-isopropylmalate and 3-isopropylmalate, via the formation of 2-isopropylmaleate. The sequence is that of 3-isopropylmalate dehydratase small subunit from Oenococcus oeni (strain ATCC BAA-331 / PSU-1).